Consider the following 424-residue polypeptide: COUP transcription factor 1 (424 aa).

The segment at 1–82 (MAMVVSSWRD…QGPPGSGQSQ (82 aa)) is disordered. The segment covering 39-68 (EQQQQQAGSGAPHTPQTPGQPGAPATPGTA) has biased composition (low complexity). The nuclear receptor DNA-binding region spans 84 to 159 (HIECVVCGDK…VGMRREAVQR (76 aa)). 2 consecutive NR C4-type zinc fingers follow at residues 87-107 (CVVCGDKSSGKHYGQFTCEGC) and 123-147 (CRANRNCPIDQHHRNQCQYCRLKKC). Positions 185 to 411 (YLSGYISLLL…TLIRDMLLSG (227 aa)) constitute an NR LBD domain.

This sequence belongs to the nuclear hormone receptor family. NR2 subfamily. As to quaternary structure, binds DNA as dimer; homodimer and probable heterodimer with NR2F6. Interacts with GTF2B; this interaction is direct. Interacts with COPS2.

The protein resides in the nucleus. Coup (chicken ovalbumin upstream promoter) transcription factor binds to the ovalbumin promoter and, in conjunction with another protein (S300-II) stimulates initiation of transcription. Binds to both direct repeats and palindromes of the 5'-AGGTCA-3' motif. Represses transcriptional activity of LHCG. The chain is COUP transcription factor 1 (NR2F1) from Bos taurus (Bovine).